The sequence spans 200 residues: Large ribosomal subunit protein uL4 (200 aa).

The tract at residues 42 to 65 is disordered; that stretch reads TRAQKTRSEVSGGGAKPWRQKGTG.

It belongs to the universal ribosomal protein uL4 family. In terms of assembly, part of the 50S ribosomal subunit.

In terms of biological role, one of the primary rRNA binding proteins, this protein initially binds near the 5'-end of the 23S rRNA. It is important during the early stages of 50S assembly. It makes multiple contacts with different domains of the 23S rRNA in the assembled 50S subunit and ribosome. Functionally, forms part of the polypeptide exit tunnel. In Vibrio atlanticus (strain LGP32) (Vibrio splendidus (strain Mel32)), this protein is Large ribosomal subunit protein uL4.